A 230-amino-acid chain; its full sequence is Orotidine 5'-phosphate decarboxylase (230 aa).

Substrate-binding positions include Asp-16, Lys-38, 65-74, Thr-119, Arg-180, Gln-189, Gly-209, and Arg-210; that span reads DLKLHDIGNT. Lys-67 serves as the catalytic Proton donor.

The protein belongs to the OMP decarboxylase family. Type 1 subfamily. In terms of assembly, homodimer.

The catalysed reaction is orotidine 5'-phosphate + H(+) = UMP + CO2. The protein operates within pyrimidine metabolism; UMP biosynthesis via de novo pathway; UMP from orotate: step 2/2. In terms of biological role, catalyzes the decarboxylation of orotidine 5'-monophosphate (OMP) to uridine 5'-monophosphate (UMP). The sequence is that of Orotidine 5'-phosphate decarboxylase from Methylobacterium radiotolerans (strain ATCC 27329 / DSM 1819 / JCM 2831 / NBRC 15690 / NCIMB 10815 / 0-1).